The following is a 471-amino-acid chain: ATP synthase subunit beta (471 aa).

Residue 158–165 participates in ATP binding; it reads GGAGCGKT.

The protein belongs to the ATPase alpha/beta chains family. F-type ATPases have 2 components, CF(1) - the catalytic core - and CF(0) - the membrane proton channel. CF(1) has five subunits: alpha(3), beta(3), gamma(1), delta(1), epsilon(1). CF(0) has three main subunits: a(1), b(2) and c(9-12). The alpha and beta chains form an alternating ring which encloses part of the gamma chain. CF(1) is attached to CF(0) by a central stalk formed by the gamma and epsilon chains, while a peripheral stalk is formed by the delta and b chains.

Its subcellular location is the cell inner membrane. It carries out the reaction ATP + H2O + 4 H(+)(in) = ADP + phosphate + 5 H(+)(out). Its function is as follows. Produces ATP from ADP in the presence of a proton gradient across the membrane. The catalytic sites are hosted primarily by the beta subunits. The polypeptide is ATP synthase subunit beta (Desulfotalea psychrophila (strain LSv54 / DSM 12343)).